The primary structure comprises 33 residues: Protamine-2C (33 aa).

A disordered region spans residues 1–33 (MPRRRRSSRRPVRRRRRPRVSRRRRRRGGRRRR).

As to expression, testis.

It is found in the nucleus. The protein resides in the chromosome. Functionally, protamines substitute for histones in the chromatin of sperm during the haploid phase of spermatogenesis. They compact sperm DNA into a highly condensed, stable and inactive complex. The chain is Protamine-2C from Oncorhynchus mykiss (Rainbow trout).